The sequence spans 185 residues: MIQETLQSAEEQMDRTIEATREDFVSVRTGRANPGLYSKVMVDYYGSFTPLQQLASFTTTDARTLLITPFDQSALRNIEKALSESEVGANPSNDGKVIRIVMPELTAERRKEYVKLVKSKAEEHKISVRNARRKAKEAMDKAVKDGEVGEDEGARGEKELDALTKRHVELIDEMAKNKEQELLEV.

The tract at residues 138–160 (AMDKAVKDGEVGEDEGARGEKEL) is disordered.

Belongs to the RRF family.

It localises to the cytoplasm. Functionally, responsible for the release of ribosomes from messenger RNA at the termination of protein biosynthesis. May increase the efficiency of translation by recycling ribosomes from one round of translation to another. The protein is Ribosome-recycling factor of Micrococcus luteus (strain ATCC 4698 / DSM 20030 / JCM 1464 / CCM 169 / CCUG 5858 / IAM 1056 / NBRC 3333 / NCIMB 9278 / NCTC 2665 / VKM Ac-2230) (Micrococcus lysodeikticus).